A 274-amino-acid polypeptide reads, in one-letter code: Small ribosomal subunit biogenesis GTPase RsgA (274 aa).

The CP-type G domain occupies K58–Y215. GTP contacts are provided by residues S108–D111 and G158–T166. Zn(2+) contacts are provided by C238, C243, H245, and C252.

This sequence belongs to the TRAFAC class YlqF/YawG GTPase family. RsgA subfamily. As to quaternary structure, monomer. Associates with 30S ribosomal subunit, binds 16S rRNA. The cofactor is Zn(2+).

The protein resides in the cytoplasm. Functionally, one of several proteins that assist in the late maturation steps of the functional core of the 30S ribosomal subunit. Helps release RbfA from mature subunits. May play a role in the assembly of ribosomal proteins into the subunit. Circularly permuted GTPase that catalyzes slow GTP hydrolysis, GTPase activity is stimulated by the 30S ribosomal subunit. The sequence is that of Small ribosomal subunit biogenesis GTPase RsgA from Mycoplasmoides gallisepticum (strain R(low / passage 15 / clone 2)) (Mycoplasma gallisepticum).